A 150-amino-acid chain; its full sequence is 3-hydroxyacyl-[acyl-carrier-protein] dehydratase FabZ (150 aa).

Histidine 53 is a catalytic residue.

The protein belongs to the thioester dehydratase family. FabZ subfamily.

It localises to the cytoplasm. The enzyme catalyses a (3R)-hydroxyacyl-[ACP] = a (2E)-enoyl-[ACP] + H2O. Its function is as follows. Involved in unsaturated fatty acids biosynthesis. Catalyzes the dehydration of short chain beta-hydroxyacyl-ACPs and long chain saturated and unsaturated beta-hydroxyacyl-ACPs. The sequence is that of 3-hydroxyacyl-[acyl-carrier-protein] dehydratase FabZ from Proteus mirabilis (strain HI4320).